A 248-amino-acid polypeptide reads, in one-letter code: PF03932 family protein CutC (248 aa).

The protein belongs to the CutC family. As to quaternary structure, homodimer.

The protein localises to the cytoplasm. In Salmonella paratyphi B (strain ATCC BAA-1250 / SPB7), this protein is PF03932 family protein CutC.